The primary structure comprises 88 residues: UPF0250 protein IL0958 (88 aa).

The protein belongs to the UPF0250 family.

This Idiomarina loihiensis (strain ATCC BAA-735 / DSM 15497 / L2-TR) protein is UPF0250 protein IL0958.